A 251-amino-acid polypeptide reads, in one-letter code: MLTLEVCCYSLACAEIAQAAGADRIELCASQQDGGITPSYGTLVGCRERVSVPVHPIIRPRSGDFCYSDSEFALMKCDLALVRDLGFPGAVIGLLDEEGHIDLRRMGELMALAGPMAVTFHRAFDMCANPLQALSQLTDLGIARILTSGQQQTAEAGLPLLRQLQQASRGPLIMAGAGVRLSNLHKFSGIGLQEVHTSAGHCVPSTMRYRKAGVSMSHAENDEFSHYCVDGGMVEAMKSALQMMETVGCSI.

This sequence belongs to the CutC family.

The protein resides in the cytoplasm. The sequence is that of PF03932 family protein CutC from Edwardsiella ictaluri (strain 93-146).